The sequence spans 860 residues: Valine--tRNA ligase (860 aa).

The 'HIGH' region signature appears at 43-53 (PTVSGALHVGH). The tract at residues 469-491 (LPVDPSSDAPTGYQESQRNQPGG) is disordered. Positions 574-578 (KMSKS) match the 'KMSKS' region motif. Lysine 577 contributes to the ATP binding site.

Belongs to the class-I aminoacyl-tRNA synthetase family. ValS type 2 subfamily. Monomer.

The protein resides in the cytoplasm. The enzyme catalyses tRNA(Val) + L-valine + ATP = L-valyl-tRNA(Val) + AMP + diphosphate. Catalyzes the attachment of valine to tRNA(Val). As ValRS can inadvertently accommodate and process structurally similar amino acids such as threonine, to avoid such errors, it has a 'posttransfer' editing activity that hydrolyzes mischarged Thr-tRNA(Val) in a tRNA-dependent manner. This chain is Valine--tRNA ligase, found in Salinispora tropica (strain ATCC BAA-916 / DSM 44818 / JCM 13857 / NBRC 105044 / CNB-440).